Here is a 305-residue protein sequence, read N- to C-terminus: Methionyl-tRNA formyltransferase (305 aa).

108–111 (SLLP) is a binding site for (6S)-5,6,7,8-tetrahydrofolate.

The protein belongs to the Fmt family.

The catalysed reaction is L-methionyl-tRNA(fMet) + (6R)-10-formyltetrahydrofolate = N-formyl-L-methionyl-tRNA(fMet) + (6S)-5,6,7,8-tetrahydrofolate + H(+). Attaches a formyl group to the free amino group of methionyl-tRNA(fMet). The formyl group appears to play a dual role in the initiator identity of N-formylmethionyl-tRNA by promoting its recognition by IF2 and preventing the misappropriation of this tRNA by the elongation apparatus. In Clavibacter michiganensis subsp. michiganensis (strain NCPPB 382), this protein is Methionyl-tRNA formyltransferase.